The primary structure comprises 205 residues: HTH-type transcriptional regulator PksA (205 aa).

Residues Glu-8–Val-68 form the HTH tetR-type domain. The H-T-H motif DNA-binding region spans Ser-31–Phe-50.

Functionally, transcriptional regulation of the polyketide synthase operon. The polypeptide is HTH-type transcriptional regulator PksA (pksA) (Bacillus subtilis (strain 168)).